The primary structure comprises 517 residues: Ubiquitin carboxyl-terminal hydrolase 30 (517 aa).

Topologically, residues 1-35 are mitochondrial intermembrane; that stretch reads MLSSRAQAARTAADKALQRFLRTGAAVRYKVMKNW. Residues 36–56 traverse the membrane as a helical segment; it reads GVIGGIAAALAAGIYVIWGPI. The Cytoplasmic segment spans residues 57 to 517; the sequence is TERKKRRKGL…QQGREYRSEE (461 aa). The region spanning 68-502 is the USP domain; that stretch reads PGLVNLGNTC…SAYLLFYERV (435 aa). The active-site Nucleophile is cysteine 77. Positions 198–221 are disordered; the sequence is MAPRQVTCHTRGSPHPTTNHWKSQ. The segment covering 204 to 218 has biased composition (polar residues); sequence TCHTRGSPHPTTNHW. Residues lysine 235 and lysine 289 each participate in a glycyl lysine isopeptide (Lys-Gly) (interchain with G-Cter in ubiquitin) cross-link. Residues 364–395 are disordered; sequence SQHGPKATENPGSAPEVQDAQAAPKPGLSQPG. Catalysis depends on histidine 452, which acts as the Proton acceptor.

It belongs to the peptidase C19 family. Ubiquitinated by parkin (PRKN) at Lys-235 and Lys-289, leading to its degradation.

The protein resides in the mitochondrion outer membrane. It catalyses the reaction Thiol-dependent hydrolysis of ester, thioester, amide, peptide and isopeptide bonds formed by the C-terminal Gly of ubiquitin (a 76-residue protein attached to proteins as an intracellular targeting signal).. With respect to regulation, inhibited by the diterpenoid derivative 15-oxospiramilactone (S3). Deubiquitinating enzyme tethered to the mitochondrial outer membrane that acts as a key inhibitor of mitophagy by counteracting the action of parkin (PRKN): hydrolyzes ubiquitin attached by parkin on target proteins, such as RHOT1/MIRO1 and TOMM20, thereby blocking parkin's ability to drive mitophagy. Preferentially cleaves 'Lys-6'- and 'Lys-11'-linked polyubiquitin chains, 2 types of linkage that participate in mitophagic signaling. Does not cleave efficiently polyubiquitin phosphorylated at 'Ser-65'. Acts as negative regulator of mitochondrial fusion by mediating deubiquitination of MFN1 and MFN2. The polypeptide is Ubiquitin carboxyl-terminal hydrolase 30 (Usp30) (Mus musculus (Mouse)).